Here is a 422-residue protein sequence, read N- to C-terminus: C-type lectin domain family 4 member M (422 aa).

The Cytoplasmic segment spans residues 1–49; it reads MSDSKEPRVQPLGLLEEDPTTSGIRLFPRDFQFQQTHGHKSSTGCLGHG. The Endocytosis signal signature appears at 14–15; the sequence is LL. A helical; Signal-anchor for type II membrane protein transmembrane segment spans residues 50–70; the sequence is PLVLQLLSFALLAGVLVAILV. The Extracellular segment spans residues 71 to 422; the sequence is QVYKVPSSLS…KKPIACFRDE (352 aa). N-linked (GlcNAc...) asparagine glycosylation occurs at Asn-92. 8 repeat units span residues 108 to 130, 131 to 151, 154 to 176, 177 to 199, 200 to 222, 223 to 245, 246 to 268, and 269 to 291. The segment at 108-292 is 8 X approximate tandem repeats; the sequence is KLQEIYQELT…AFERLCCRCP (185 aa). 4 cysteine pairs are disulfide-bonded: Cys-288/Cys-418, Cys-291/Cys-302, Cys-319/Cys-412, and Cys-391/Cys-404. Positions 297–413 constitute a C-type lectin domain; it reads FFQGNCYFMS…CNVDNYWICK (117 aa). Glu-382, Asn-384, Ser-386, Glu-389, Asn-400, and Asp-401 together coordinate Ca(2+). Asn-384 carries an N-linked (GlcNAc...) asparagine glycan.

As to quaternary structure, homotetramer.

The protein resides in the membrane. Functionally, probable pathogen-recognition receptor involved in peripheral immune surveillance in liver. May mediate the endocytosis of pathogens which are subsequently degraded in lysosomal compartments. Probably recognizes in a calcium-dependent manner high mannose N-linked oligosaccharides in a variety of pathogen antigens. Is a receptor for ICAM3, probably by binding to mannose-like carbohydrates. The polypeptide is C-type lectin domain family 4 member M (CLEC4M) (Symphalangus syndactylus (Siamang)).